We begin with the raw amino-acid sequence, 151 residues long: Extracellular globin-4 (151 aa).

Residues 6–151 (CCSYEDRREI…LVARIAKDLP (146 aa)) form the Globin domain. Residues cysteine 7 and cysteine 138 are joined by a disulfide bond. Histidine 101 serves as a coordination point for heme b.

Belongs to the globin family. In terms of assembly, the extracellular hemoglobin of the earthworm consists of 12 subunits that have a hexagonal bilayer structure with a molecular weight near 3.8 million. Each one-twelfth subunit is composed primarily of disulfide linked trimers (chains A, B, and C) and monomers (chain D).

The protein localises to the secreted. The polypeptide is Extracellular globin-4 (Lumbricus terrestris (Common earthworm)).